Here is a 552-residue protein sequence, read N- to C-terminus: Mothers against decapentaplegic homolog 4 (552 aa).

The mediates interaction with ZBTB7A stretch occupies residues 1–322 (MDNMSITNTP…PISNHPAPEY (322 aa)). An MH1 domain is found at 18-142 (SIVHSLMCHR…YERVVSPGID (125 aa)). Lysine 37 is subject to N6-acetyllysine. The tract at residues 44-69 (VKKLKEKKDELDSLITAITTNGAHPS) is required for interaction with TSC22D1. Cysteine 71 contributes to the Zn(2+) binding site. Lysine 113 participates in a covalent cross-link: Glycyl lysine isopeptide (Lys-Gly) (interchain with G-Cter in SUMO2). 3 residues coordinate Zn(2+): cysteine 115, cysteine 127, and histidine 132. Residues 167 to 193 (EGQPSLPTEGHSIQTIQHPPSNRASTE) are disordered. Residues 177–193 (HSIQTIQHPPSNRASTE) are compositionally biased toward polar residues. The segment at 275-320 (PYTPNLPHHQNGHLQHHPPMPPHPGHYWPVHNELAFQPPISNHPAP) is SAD. Residues 323 to 552 (WCSIAYFEMD…MPIADPQPLD (230 aa)) form the MH2 domain. Residues lysine 428 and lysine 507 each carry the N6-acetyllysine modification. Residue lysine 519 forms a Glycyl lysine isopeptide (Lys-Gly) (interchain with G-Cter in ubiquitin) linkage.

The protein belongs to the dwarfin/SMAD family. Monomer; in the absence of TGF-beta activation. Heterotrimer; on TGF-beta activation. Heterotrimer composed of two molecules of a C-terminally phosphorylated R-SMAD molecule, SMAD2 or SMAD3, and one molecule of SMAD4 to form the transcriptional active SMAD2/SMAD3-SMAD4 complex. Found in a ternary complex composed of SMAD4, STK11/LKB1 and STK11IP. Found in a complex with SMAD1 and YY1. Identified in a complex that contains at least ZNF451, SMAD2, SMAD3 and SMAD4. Interacts with ATF2, COPS5, DACH1, MSG1, SKI, STK11/LKB1, STK11IP and TRIM33. Associates with ZNF423 or ZNF521 in response to BMP2 leading to activate transcription of BMP target genes. Interacts with USP9X. Interacts with RBPMS. Interacts with WWTR1 (via coiled-coil domain). Interacts with CITED1 and CITED2. Interacts with PDPK1 (via PH domain). Interacts with VPS39; this interaction affects heterodimer formation with SMAD3, but not with SMAD2, and leads to inhibition of SMAD3-dependent transcription activation. Interactions with VPS39 and SMAD2 may be mutually exclusive. Interacts (via MH2 domain) with ZNF451 (via N-terminal zinc-finger domains). Interacts with ZC3H3. Interacts weakly with ZNF8. Interacts with NUP93 and IPO7; translocates SMAD4 to the nucleus through the NPC upon BMP7 stimulation resulting in activation of SMAD4 signaling. Interacts with CREB3L1, the interaction takes place upon TGFB1 induction and SMAD4 acts as a CREB3L1 coactivator to induce the expression of genes involved in the assembly of collagen extracellular matrix. Interacts with DLX1. Interacts with ZBTB7A; the interaction is direct and stimulated by TGFB1. Interacts with CREBBP; the recruitment of this transcriptional coactivator is negatively regulated by ZBTB7A. Interacts with EP300; the interaction with this transcriptional coactivator is negatively regulated by ZBTB7A. Interacts with HDAC1. Interacts (via MH2 domain) with ZMIZ1 (via SP-RING-type domain); in the TGF-beta signaling pathway increases the activity of the SMAD3/SMAD4 transcriptional complex. Interacts (via N-terminus) with TSC22D1. Phosphorylated by PDPK1. Post-translationally, monoubiquitinated on Lys-519 by E3 ubiquitin-protein ligase TRIM33. Monoubiquitination hampers its ability to form a stable complex with activated SMAD2/3 resulting in inhibition of TGF-beta/BMP signaling cascade. Deubiquitination by USP9X restores its competence to mediate TGF-beta signaling.

Its subcellular location is the cytoplasm. It is found in the nucleus. Common SMAD (co-SMAD) is the coactivator and mediator of signal transduction by TGF-beta (transforming growth factor). Component of the heterotrimeric SMAD2/SMAD3-SMAD4 complex that forms in the nucleus and is required for the TGF-mediated signaling. Promotes binding of the SMAD2/SMAD4/FAST-1 complex to DNA and provides an activation function required for SMAD1 or SMAD2 to stimulate transcription. Component of the multimeric SMAD3/SMAD4/JUN/FOS complex which forms at the AP1 promoter site; required for synergistic transcriptional activity in response to TGF-beta. Acts synergistically with SMAD1 and YY1 in bone morphogenetic protein (BMP)-mediated cardiac-specific gene expression. Binds to SMAD binding elements (SBEs) (5'-GTCT/AGAC-3') within BMP response element (BMPRE) of cardiac activating regions. May act as a tumor suppressor. Positively regulates PDPK1 kinase activity by stimulating its dissociation from the 14-3-3 protein YWHAQ which acts as a negative regulator. In muscle physiology, plays a central role in the balance between atrophy and hypertrophy. When recruited by MSTN, promotes atrophy response via phosphorylated SMAD2/4. MSTN decrease causes SMAD4 release and subsequent recruitment by the BMP pathway to promote hypertrophy via phosphorylated SMAD1/5/8. The protein is Mothers against decapentaplegic homolog 4 (Smad4) of Rattus norvegicus (Rat).